Consider the following 166-residue polypeptide: Protein E6 (166 aa).

2 zinc fingers span residues 50 to 86 (CNFC…CRWC) and 123 to 159 (CQNC…CRLC).

This sequence belongs to the papillomaviridae E6 protein family. As to quaternary structure, forms homodimers. Interacts with ubiquitin-protein ligase UBE3A/E6-AP; this interaction stimulates UBE3A ubiquitin activity. Interacts with host BAK1.

The protein resides in the host cytoplasm. Its subcellular location is the host nucleus. In terms of biological role, plays a major role in the induction and maintenance of cellular transformation. E6 associates with host UBE3A/E6-AP ubiquitin-protein ligase and modulates its activity. Protects host keratinocytes from apoptosis by mediating the degradation of host BAK1. May also inhibit host immune response. The protein is Protein E6 of Homo sapiens (Human).